We begin with the raw amino-acid sequence, 83 residues long: Exodeoxyribonuclease 7 small subunit (83 aa).

This sequence belongs to the XseB family. Heterooligomer composed of large and small subunits.

The protein resides in the cytoplasm. The enzyme catalyses Exonucleolytic cleavage in either 5'- to 3'- or 3'- to 5'-direction to yield nucleoside 5'-phosphates.. Bidirectionally degrades single-stranded DNA into large acid-insoluble oligonucleotides, which are then degraded further into small acid-soluble oligonucleotides. In Rhizobium etli (strain ATCC 51251 / DSM 11541 / JCM 21823 / NBRC 15573 / CFN 42), this protein is Exodeoxyribonuclease 7 small subunit.